The chain runs to 637 residues: ATP-dependent rRNA helicase SPB4 (637 aa).

The short motif at 14-42 (WDTLNPPLSEWIRDAVATMGFDQMTPVQA) is the Q motif element. The region spanning 45 to 247 (LPHFMGNKDV…RVGLRNPVKI (203 aa)) is the Helicase ATP-binding domain. 58 to 65 (AVTGSGKT) contacts ATP. Residues 195–198 (DEAD) carry the DEAD box motif. The Helicase C-terminal domain maps to 283–438 (ALAELLRQLP…TITTSEDDAA (156 aa)). A coiled-coil region spans residues 524–631 (KEKTREQQRK…AAAKQEKDGE (108 aa)). Composition is skewed to basic and acidic residues over residues 535 to 553 (ALEEEKSGVKKQDKSEEFK), 563 to 576 (SAKHEKEDDRVERR), 583 to 618 (RDAEATSKMTDDEKVKQMELNDLIAEVRRQNREKAA), and 625 to 637 (KQEKDGEFKGFDD). The tract at residues 535–637 (ALEEEKSGVK…KDGEFKGFDD (103 aa)) is disordered.

Belongs to the DEAD box helicase family. DDX55/SPB4 subfamily. Component of pre-60S ribosomal complexes.

The protein resides in the nucleus. It localises to the nucleolus. The enzyme catalyses ATP + H2O = ADP + phosphate + H(+). ATP-binding RNA helicase involved in the biogenesis of 60S ribosomal subunits. Binds 90S pre-ribosomal particles and dissociates from pre-60S ribosomal particles after processing of 27SB pre-rRNA. Required for the normal formation of 18S rRNA through the processing of pre-rRNAs at sites A0, A1 and A2, and the normal formation of 25S and 5.8S rRNAs through the processing of pre-rRNAs at sites C1 and C2. The chain is ATP-dependent rRNA helicase SPB4 from Gibberella zeae (strain ATCC MYA-4620 / CBS 123657 / FGSC 9075 / NRRL 31084 / PH-1) (Wheat head blight fungus).